The chain runs to 280 residues: Dermonecrotic toxin LgSicTox-alphaIA1 (280 aa).

Residue His12 is part of the active site. Residues Glu32 and Asp34 each contribute to the Mg(2+) site. His48 (nucleophile) is an active-site residue. Cys52 and Cys58 are joined by a disulfide. Residue Asp92 participates in Mg(2+) binding.

Belongs to the arthropod phospholipase D family. Class I subfamily. Mg(2+) serves as cofactor. As to expression, expressed by the venom gland.

Its subcellular location is the secreted. The enzyme catalyses an N-(acyl)-sphingosylphosphocholine = an N-(acyl)-sphingosyl-1,3-cyclic phosphate + choline. The catalysed reaction is an N-(acyl)-sphingosylphosphoethanolamine = an N-(acyl)-sphingosyl-1,3-cyclic phosphate + ethanolamine. It carries out the reaction a 1-acyl-sn-glycero-3-phosphocholine = a 1-acyl-sn-glycero-2,3-cyclic phosphate + choline. It catalyses the reaction a 1-acyl-sn-glycero-3-phosphoethanolamine = a 1-acyl-sn-glycero-2,3-cyclic phosphate + ethanolamine. Its function is as follows. Dermonecrotic toxins cleave the phosphodiester linkage between the phosphate and headgroup of certain phospholipids (sphingolipid and lysolipid substrates), forming an alcohol (often choline) and a cyclic phosphate. This toxin acts on sphingomyelin (SM). It may also act on ceramide phosphoethanolamine (CPE), lysophosphatidylcholine (LPC) and lysophosphatidylethanolamine (LPE), but not on lysophosphatidylserine (LPS), and lysophosphatidylglycerol (LPG). It acts by transphosphatidylation, releasing exclusively cyclic phosphate products as second products. Induces dermonecrosis, hemolysis, increased vascular permeability, edema, inflammatory response, and platelet aggregation. The protein is Dermonecrotic toxin LgSicTox-alphaIA1 of Loxosceles gaucho (Spider).